The chain runs to 460 residues: Ecdysteroid UDP-glucosyltransferase (460 aa).

Residues 1–18 form the signal peptide; sequence MFISILLLALAVERILCA.

It belongs to the UDP-glycosyltransferase family.

Catalyzes the transfer of glucose from UDP-glucose to ecdysteroids which are insect molting hormones. Expression of egt interferes with normal insect development and block molting. The chain is Ecdysteroid UDP-glucosyltransferase (EGT) from Lacanobia oleracea granulosis virus (LoGV).